A 1137-amino-acid polypeptide reads, in one-letter code: Guanine nucleotide exchange factor DBS (1137 aa).

The CRAL-TRIO domain occupies 52–224 (TAMATDEIMH…DLGGTLDYCH (173 aa)). The Spectrin repeat unit spans residues 351–456 (LQLRHFEQGF…IARRRGLLSK (106 aa)). Residues Ser-457 and Ser-480 each carry the phosphoserine modification. Positions 503–529 (LETGAENKIQELNAIYKEYESILNQDL) form a coiled coil. Residues 557 to 625 (LAARQTRPVQ…QGRGSAGEEE (69 aa)) form a disordered region. The span at 584 to 597 (GIRRGSENSSSEGG) shows a compositional bias: low complexity. The span at 607–616 (AKSEMSESRQ) shows a compositional bias: basic and acidic residues. At Ser-620 the chain carries Phosphoserine. A DH domain is found at 631-811 (LRRHVMSELL…LGILKAVNDS (181 aa)). One can recognise a PH domain in the interval 829-945 (KLLMQGSFSV…WVNEIRKVLT (117 aa)). Disordered stretches follow at residues 955–1058 (SQHR…LVPG) and 1116–1137 (GPSG…RAHP). Residues 962-977 (QSQSLPLPAPTSTSPS) are compositionally biased toward low complexity. Phosphoserine is present on residues Ser-1033, Ser-1034, Ser-1041, and Ser-1042. Residues 1055-1116 (LVPGKYTVVA…PASSLSVRLG (62 aa)) enclose the SH3 domain. Positions 1119–1128 (GSAQCLSSSG) are enriched in polar residues.

It belongs to the MCF2 family. As to quaternary structure, interacts with GTP-bound RAC1. Interacts with CDC42. Interacts with RHOA. Interacts with CCPG1, which results in specific inhibition of its exchange activity toward RHOA, but does not affect its activity on CDC42.

The protein resides in the cytoplasm. It is found in the cell membrane. The protein localises to the endomembrane system. Its function is as follows. Guanine nucleotide exchange factor that catalyzes guanine nucleotide exchange on RHOA and CDC42, and thereby contributes to the regulation of RHOA and CDC42 signaling pathways. Seems to lack activity with RAC1. Becomes activated and highly tumorigenic by truncation of the N-terminus. Isoform 5 activates CDC42. In terms of biological role, does not catalyze guanine nucleotide exchange on CDC42. The protein is Guanine nucleotide exchange factor DBS (MCF2L) of Homo sapiens (Human).